Consider the following 218-residue polypeptide: UPF0319 protein swp_2242 (218 aa).

Positions 1–21 are cleaved as a signal peptide; sequence MRLSQSVLTALLICVNSAAFA.

The protein belongs to the UPF0319 family.

This is UPF0319 protein swp_2242 from Shewanella piezotolerans (strain WP3 / JCM 13877).